The sequence spans 305 residues: Homoserine O-acetyltransferase (305 aa).

Cys-142 serves as the catalytic Acyl-thioester intermediate. Substrate contacts are provided by Lys-163 and Ser-192. Catalysis depends on His-235, which acts as the Proton acceptor. Glu-237 is a catalytic residue. Arg-249 provides a ligand contact to substrate.

It belongs to the MetA family.

It is found in the cytoplasm. It carries out the reaction L-homoserine + acetyl-CoA = O-acetyl-L-homoserine + CoA. The protein operates within amino-acid biosynthesis; L-methionine biosynthesis via de novo pathway; O-acetyl-L-homoserine from L-homoserine: step 1/1. In terms of biological role, transfers an acetyl group from acetyl-CoA to L-homoserine, forming acetyl-L-homoserine. The protein is Homoserine O-acetyltransferase of Bacteroides thetaiotaomicron (strain ATCC 29148 / DSM 2079 / JCM 5827 / CCUG 10774 / NCTC 10582 / VPI-5482 / E50).